The primary structure comprises 411 residues: Metacaspase-1B (411 aa).

Positions 1 to 97 are disordered; sequence MYHRHSAPPP…PPLEAQQFGN (97 aa). The span at 7-65 shows a compositional bias: pro residues; it reads APPPPGRSRGYPPPQQQWPPQPYQYLPYPPQGPPPAHTFPPPAHRSYPSPYPTPPPHSP. Catalysis depends on residues His-198 and Cys-254.

This sequence belongs to the peptidase C14B family.

Involved in cell death (apoptosis). The polypeptide is Metacaspase-1B (casB) (Neosartorya fischeri (strain ATCC 1020 / DSM 3700 / CBS 544.65 / FGSC A1164 / JCM 1740 / NRRL 181 / WB 181) (Aspergillus fischerianus)).